The following is a 417-amino-acid chain: Carbohydrate sulfotransferase 8 (417 aa).

At 1-10 the chain is on the cytoplasmic side; the sequence is MTPRLGTMRL. Residues 11–31 traverse the membrane as a helical; Signal-anchor for type II membrane protein segment; the sequence is ACMFSSILLFGAAGLLLFISL. Over 32-417 the chain is Lumenal; the sequence is QDPIELSPQQ…NYSKPFSDLY (386 aa). Residues 47 to 101 form a disordered region; it reads FSIRPQQPQHDSHLRISTEKGTRDSPSGSPRGLQLQAPDQPRPHPKAAGSPLRLR. Positions 56–69 are enriched in basic and acidic residues; the sequence is HDSHLRISTEKGTR. 2 N-linked (GlcNAc...) asparagine glycosylation sites follow: asparagine 121 and asparagine 122. 3'-phosphoadenylyl sulfate contacts are provided by residues 191-197 and 251-259; these read PKAGCSN and REPFERLVS. 3 N-linked (GlcNAc...) asparagine glycosylation sites follow: asparagine 287, asparagine 360, and asparagine 408.

Belongs to the sulfotransferase 2 family. In terms of tissue distribution, strongly expressed in brain. Weakly expressed in lung and kidney. Weakly expressed in pituitary.

The protein localises to the golgi apparatus membrane. Functionally, catalyzes the transfer of sulfate to position 4 of non-reducing N-acetylgalactosamine (GalNAc) residues in both N-glycans and O-glycans. Required for biosynthesis of glycoprotein hormones lutropin and thyrotropin, by mediating sulfation of their carbohydrate structures. Only active against terminal GalNAcbeta1,GalNAcbeta. Not active toward chondroitin. The chain is Carbohydrate sulfotransferase 8 (Chst8) from Mus musculus (Mouse).